Here is a 130-residue protein sequence, read N- to C-terminus: Putative pre-16S rRNA nuclease (130 aa).

This sequence belongs to the YqgF nuclease family.

It is found in the cytoplasm. Could be a nuclease involved in processing of the 5'-end of pre-16S rRNA. In Buchnera aphidicola subsp. Cinara cedri (strain Cc), this protein is Putative pre-16S rRNA nuclease.